The chain runs to 308 residues: HTH-type transcriptional activator AllS (308 aa).

One can recognise an HTH lysR-type domain in the interval 2-59 (FDPETLRTFISVAETGSFSKAAERLCKTTATTSYRIKLLEENTGVGLFFRTTRSVSLT). Positions 19 to 38 (FSKAAERLCKTTATTSYRIK) form a DNA-binding region, H-T-H motif.

The protein belongs to the LysR transcriptional regulatory family.

Functionally, positive regulator essential for the expression of allD operon. Binds to the allD promoter. This is HTH-type transcriptional activator AllS (allS) from Salmonella typhi.